Here is a 380-residue protein sequence, read N- to C-terminus: Erythronate-4-phosphate dehydrogenase (380 aa).

Substrate is bound by residues Ser-45 and Thr-66. NAD(+)-binding positions include 126–127 (QV), Asp-146, Thr-175, 206–208 (ASR), and Asp-232. Arg-208 is a catalytic residue. Glu-237 is an active-site residue. His-254 acts as the Proton donor in catalysis. Gly-257 contributes to the NAD(+) binding site. Tyr-258 is a binding site for substrate.

It belongs to the D-isomer specific 2-hydroxyacid dehydrogenase family. PdxB subfamily. Homodimer.

It localises to the cytoplasm. The catalysed reaction is 4-phospho-D-erythronate + NAD(+) = (R)-3-hydroxy-2-oxo-4-phosphooxybutanoate + NADH + H(+). The protein operates within cofactor biosynthesis; pyridoxine 5'-phosphate biosynthesis; pyridoxine 5'-phosphate from D-erythrose 4-phosphate: step 2/5. Catalyzes the oxidation of erythronate-4-phosphate to 3-hydroxy-2-oxo-4-phosphonooxybutanoate. This Pseudomonas aeruginosa (strain UCBPP-PA14) protein is Erythronate-4-phosphate dehydrogenase.